The primary structure comprises 398 residues: Cystathionine gamma-lyase (398 aa).

Phosphoserine is present on Ser-50. Substrate contacts are provided by Arg-61, Tyr-113, and Arg-118. N6-(pyridoxal phosphate)lysine is present on Lys-211. Substrate is bound at residue Glu-338.

Belongs to the trans-sulfuration enzymes family. As to quaternary structure, homotetramer. Interacts with CALM in a calcium-dependent manner. The cofactor is pyridoxal 5'-phosphate.

It localises to the cytoplasm. The enzyme catalyses L,L-cystathionine + H2O = 2-oxobutanoate + L-cysteine + NH4(+). The catalysed reaction is L-homoserine = 2-oxobutanoate + NH4(+). It catalyses the reaction L-selenocystathionine + H2O = L-selenocysteine + 2-oxobutanoate + NH4(+). It carries out the reaction L-cysteine + H2O = hydrogen sulfide + pyruvate + NH4(+) + H(+). The enzyme catalyses L-homocysteine + H2O = 2-oxobutanoate + hydrogen sulfide + NH4(+) + H(+). It functions in the pathway amino-acid biosynthesis; L-cysteine biosynthesis; L-cysteine from L-homocysteine and L-serine: step 2/2. In terms of biological role, catalyzes the last step in the trans-sulfuration pathway from L-methionine to L-cysteine in a pyridoxal-5'-phosphate (PLP)-dependent manner, which consists on cleaving the L,L-cystathionine molecule into L-cysteine, ammonia and 2-oxobutanoate. Part of the L-cysteine derived from the trans-sulfuration pathway is utilized for biosynthesis of the ubiquitous antioxidant glutathione. Besides its role in the conversion of L-cystathionine into L-cysteine, it utilizes L-cysteine and L-homocysteine as substrates (at much lower rates than L,L-cystathionine) to produce hydrogen sulfide (H2S). In vitro, it converts two L-cysteine molecules into lanthionine and H2S, and two L-homocysteine molecules to homolanthionine and H2S, which can be particularly relevant under conditions of severe hyperhomocysteinemia. Lanthionine and homolanthionine are structural homologs of L,L-cystathionine that differ by the absence or presence of an extra methylene group, respectively. Acts as a cysteine-protein sulfhydrase by mediating sulfhydration of target proteins: sulfhydration consists of converting -SH groups into -SSH on specific cysteine residues of target proteins such as GAPDH, PTPN1 and NF-kappa-B subunit RELA, thereby regulating their function. By generating the gasotransmitter H2S, it participates in a number of physiological processes such as vasodilation, bone protection, and inflammation. Plays an essential role in myogenesis by contributing to the biogenesis of H2S in skeletal muscle tissue. Can also accept homoserine as substrate. Catalyzes the elimination of selenocystathionine (which can be derived from the diet) to yield selenocysteine, ammonia and 2-oxobutanoate. This chain is Cystathionine gamma-lyase (Cth), found in Rattus norvegicus (Rat).